Reading from the N-terminus, the 275-residue chain is Exosome complex component Rrp42 (275 aa).

This sequence belongs to the RNase PH family. Rrp42 subfamily. As to quaternary structure, component of the archaeal exosome complex. Forms a hexameric ring-like arrangement composed of 3 Rrp41-Rrp42 heterodimers. The hexameric ring associates with a trimer of Rrp4 and/or Csl4 subunits.

The protein resides in the cytoplasm. Non-catalytic component of the exosome, which is a complex involved in RNA degradation. Contributes to the structuring of the Rrp41 active site. In Saccharolobus islandicus (strain M.16.27) (Sulfolobus islandicus), this protein is Exosome complex component Rrp42.